The chain runs to 60 residues: Andropin (60 aa).

A signal peptide spans 1–23; it reads MKYFVVLVVLALILAIAVGPSDA.

Belongs to the andropin family. As to expression, ejaculatory duct of adult males.

The protein localises to the secreted. Its function is as follows. Male-specific peptide with moderate activity against Gram-positive bacteria. The chain is Andropin (Anp) from Drosophila simulans (Fruit fly).